The following is a 510-amino-acid chain: Amidophosphoribosyltransferase (510 aa).

The active-site Nucleophile is C2. In terms of domain architecture, Glutamine amidotransferase type-2 spans 2 to 239; sequence CGILGIALAD…PGEAVIIPKD (238 aa). Mg(2+) is bound by residues D373 and D374.

This sequence in the C-terminal section; belongs to the purine/pyrimidine phosphoribosyltransferase family. It depends on Mg(2+) as a cofactor.

The enzyme catalyses 5-phospho-beta-D-ribosylamine + L-glutamate + diphosphate = 5-phospho-alpha-D-ribose 1-diphosphate + L-glutamine + H2O. It functions in the pathway purine metabolism; IMP biosynthesis via de novo pathway; N(1)-(5-phospho-D-ribosyl)glycinamide from 5-phospho-alpha-D-ribose 1-diphosphate: step 1/2. The protein is Amidophosphoribosyltransferase (ADE4) of Lachancea kluyveri (Yeast).